A 461-amino-acid chain; its full sequence is UDP-glucose 6-dehydrogenase TuaD (461 aa).

Residues 3 to 20 (KIAV…GTCF), valine 12, aspartate 31, lysine 36, threonine 122, and glutamate 156 each bind NAD(+). Substrate is bound by residues 152-156 (EFLRE), lysine 205, asparagine 209, 250-254 (FLKAG), and glycine 258. Residue cysteine 261 is the Nucleophile of the active site. Lysine 264 contacts NAD(+). Residue lysine 321 coordinates substrate. Arginine 328 contacts NAD(+).

Belongs to the UDP-glucose/GDP-mannose dehydrogenase family. Post-translationally, phosphorylated by YwqD and dephosphorylated by YwqE in vitro.

It is found in the cytoplasm. It catalyses the reaction UDP-alpha-D-glucose + 2 NAD(+) + H2O = UDP-alpha-D-glucuronate + 2 NADH + 3 H(+). It functions in the pathway nucleotide-sugar biosynthesis; UDP-alpha-D-glucuronate biosynthesis; UDP-alpha-D-glucuronate from UDP-alpha-D-glucose: step 1/1. Its activity is regulated as follows. Activated by phosphorylation; inhibited by dephosphorylation. Functionally, catalyzes the conversion of UDP-glucose into UDP-glucuronate, one of the precursors of teichuronic acid. The protein is UDP-glucose 6-dehydrogenase TuaD (tuaD) of Bacillus subtilis (strain 168).